The primary structure comprises 101 residues: Urease subunit beta (101 aa).

This sequence belongs to the urease beta subunit family. In terms of assembly, heterotrimer of UreA (gamma), UreB (beta) and UreC (alpha) subunits. Three heterotrimers associate to form the active enzyme.

Its subcellular location is the cytoplasm. It carries out the reaction urea + 2 H2O + H(+) = hydrogencarbonate + 2 NH4(+). It participates in nitrogen metabolism; urea degradation; CO(2) and NH(3) from urea (urease route): step 1/1. This chain is Urease subunit beta, found in Burkholderia multivorans (strain ATCC 17616 / 249).